We begin with the raw amino-acid sequence, 206 residues long: 2,3-bisphosphoglycerate-dependent phosphoglycerate mutase (206 aa).

Residues 9–16 (RHGQSEWN), 22–23 (TG), Arg-61, 88–91 (ERDY), Lys-99, 115–116 (RR), and 159–160 (GN) each bind substrate. His-10 functions as the Tele-phosphohistidine intermediate in the catalytic mechanism. Glu-88 (proton donor/acceptor) is an active-site residue.

The protein belongs to the phosphoglycerate mutase family. BPG-dependent PGAM subfamily. Homodimer.

It catalyses the reaction (2R)-2-phosphoglycerate = (2R)-3-phosphoglycerate. It functions in the pathway carbohydrate degradation; glycolysis; pyruvate from D-glyceraldehyde 3-phosphate: step 3/5. Functionally, catalyzes the interconversion of 2-phosphoglycerate and 3-phosphoglycerate. This Bartonella quintana (strain Toulouse) (Rochalimaea quintana) protein is 2,3-bisphosphoglycerate-dependent phosphoglycerate mutase.